Here is a 584-residue protein sequence, read N- to C-terminus: ATP synthase subunit alpha, mitochondrial (584 aa).

A mitochondrion-targeting transit peptide spans 1–24; sequence MRRFGSKFASGLASRCALACPLAS. Residues 207–214 and glutamine 464 each bind ATP; that span reads DRQTGKTS.

It belongs to the ATPase alpha/beta chains family. As to quaternary structure, F-type ATPases have 2 components, F(1) - the catalytic core - and F(o) - the membrane proton channel. F(1) has five subunits: alpha(3), beta(3), gamma(1), delta(1), epsilon(1), plus the additional subunit P18 (Tb427.05.1710) that is not present in F(1)F(o) ATP synthase from metazoa. Subunit P18 (Tb927.5.1710) interacts with the alpha subunit with a 1:1 stoichiometry; the interaction is direct. Subunit gamma is part of the central stalk. F(o) has three main subunits: a, b and c. The trypanosomal ATPase complex contains additional subunits that are not present in the F(1)F(o) ATP synthase from metazoa.

The protein resides in the mitochondrion. It localises to the mitochondrion inner membrane. Functionally, mitochondrial membrane ATP synthase (F(1)F(o) ATP synthase) produces ATP from ADP in the presence of a proton gradient across the membrane which is generated by electron transport complexes of the respiratory chain. F-type ATPases consist of two structural domains, F(1) - containing the extramembraneous catalytic core, and F(o) - containing the membrane proton channel, linked together by a central stalk and a peripheral stalk. During catalysis, ATP synthesis in the catalytic domain of F(1) is coupled via a rotary mechanism of the central stalk subunits to proton translocation. Subunits alpha and beta form the catalytic core in F(1). Rotation of the central stalk against the surrounding alpha(3)beta(3) subunits leads to hydrolysis of ATP in three separate catalytic sites on the beta subunits. Subunit alpha does not bear the catalytic high-affinity ATP-binding sites. Contrary to the procyclic, insect form that requires F(1)F(o) ATP synthase for ATP synthesis, the bloodstream form relies on ATP hydrolysis by F(1)F(o) ATP synthase to maintain its mitochondrial membrane potential. The sequence is that of ATP synthase subunit alpha, mitochondrial from Trypanosoma brucei brucei.